The chain runs to 393 residues: UDP-glucose 6-dehydrogenase (393 aa).

6 residues coordinate NAD(+): valine 11, aspartate 31, lysine 36, threonine 85, threonine 120, and glutamate 147. Substrate contacts are provided by residues 143–147 (EFLRE), lysine 199, asparagine 203, 244–248 (YNNPS), and glycine 252. NAD(+) is bound at residue tyrosine 254. Cysteine 255 functions as the Nucleophile in the catalytic mechanism. Position 258 (lysine 258) interacts with NAD(+). Lysine 309 lines the substrate pocket. Residue arginine 316 coordinates NAD(+).

This sequence belongs to the UDP-glucose/GDP-mannose dehydrogenase family. Homodimer.

It catalyses the reaction UDP-alpha-D-glucose + 2 NAD(+) + H2O = UDP-alpha-D-glucuronate + 2 NADH + 3 H(+). The protein operates within nucleotide-sugar biosynthesis; UDP-alpha-D-glucuronate biosynthesis; UDP-alpha-D-glucuronate from UDP-alpha-D-glucose: step 1/1. Its pathway is capsule biogenesis; capsule polysaccharide biosynthesis. Its function is as follows. Catalyzes the formation of UDP-glucuronic acid which is required for capsular polysaccharide synthesis. Does not catalyze the formation of glucuronamide moiety of the capsular polysaccharide. This is UDP-glucose 6-dehydrogenase from Campylobacter jejuni subsp. jejuni serotype O:2 (strain ATCC 700819 / NCTC 11168).